A 395-amino-acid chain; its full sequence is Small RNA 2'-O-methyltransferase (395 aa).

The S-adenosyl-L-methionine site is built by Asp-79 and Ser-115. Residues Glu-133, Glu-136, His-137, and His-182 each coordinate Mg(2+).

The protein belongs to the methyltransferase superfamily. HEN1 family. The cofactor is Mg(2+). In terms of tissue distribution, specifically expressed in testis.

It is found in the cytoplasm. It carries out the reaction small RNA 3'-end nucleotide + S-adenosyl-L-methionine = small RNA 3'-end 2'-O-methylnucleotide + S-adenosyl-L-homocysteine + H(+). Functionally, methyltransferase that adds a 2'-O-methyl group at the 3'-end of piRNAs, a class of 24 to 30 nucleotide RNAs that are generated by a Dicer-independent mechanism and are primarily derived from transposons and other repeated sequence elements. This probably protects the 3'-end of piRNAs from uridylation activity and subsequent degradation. Stabilization of piRNAs is essential for gametogenesis. The sequence is that of Small RNA 2'-O-methyltransferase (Henmt1) from Mus musculus (Mouse).